A 443-amino-acid polypeptide reads, in one-letter code: Thymidine phosphorylase (443 aa).

This sequence belongs to the thymidine/pyrimidine-nucleoside phosphorylase family. In terms of assembly, homodimer.

It carries out the reaction thymidine + phosphate = 2-deoxy-alpha-D-ribose 1-phosphate + thymine. Its pathway is pyrimidine metabolism; dTMP biosynthesis via salvage pathway; dTMP from thymine: step 1/2. The enzymes which catalyze the reversible phosphorolysis of pyrimidine nucleosides are involved in the degradation of these compounds and in their utilization as carbon and energy sources, or in the rescue of pyrimidine bases for nucleotide synthesis. This chain is Thymidine phosphorylase, found in Shewanella woodyi (strain ATCC 51908 / MS32).